We begin with the raw amino-acid sequence, 489 residues long: Cytochrome P450 monooxygenase AMT3 (489 aa).

The chain crosses the membrane as a helical span at residues 292 to 312; it reads LFMVAGTETTITALSGLVFLL. A heme-binding site is contributed by Cys436.

The protein belongs to the cytochrome P450 family. Heme serves as cofactor.

It localises to the membrane. It participates in mycotoxin biosynthesis. Functionally, cytochrome P450 monooxygenase; part of the gene clusters that mediate the biosynthesis of AM-toxins, host-selective toxins (HSTs) causing Alternaria blotch on apple, a worldwide distributed disease. AM-toxins are cyclic depsipeptides containing the 3 residues 2-hydroxy-isovaleric acid (2-HIV), dehydroalanine, L-alanine which are common for all 3 AM-toxins I to III. The fourth precursor is L-alpha-amino-methoxyphenyl-valeric acid (L-Amv) for AM-toxin I, L-alpha-amino-phenyl-valeric acid (L-Apv) for AM-toxin II, and L-alpha-amino-hydroxyphenyl-valeric acid (L-Ahv) for AM-toxin III. AM-toxins have two target sites for affecting susceptible apple cells; they cause invagination of the plasma membrane and electrolyte loss and chloroplast disorganization. The non-ribosomal peptide synthetase AMT1 contains 4 catalytic modules and is responsible for activation of each residue in AM-toxin. The aldo-keto reductase AMT2 catalyzes the conversion of 2-keto-isovaleric acid (2-KIV) to 2-hydroxy-isovaleric acid (2-HIV), one of the precursor residues incorporated by AMT1 during AM-toxin biosynthesis, by reduction of its ketone to an alcohol. The cytochrome P450 monooxygenase AMT3 and the thioesterase AMT4 are also important for AM-toxin production, but their exact function within the AM-toxin biosynthesis are not known yet. Up to 21 proteins (including AMT1 to AMT4) are predicted to be involved in AM-toxin biosynthesis since their expression ishighly up-regulated in AM-toxin-producing cultures. The sequence is that of Cytochrome P450 monooxygenase AMT3 from Alternaria alternata (Alternaria rot fungus).